The primary structure comprises 295 residues: Ribosomal RNA small subunit methyltransferase H (295 aa).

S-adenosyl-L-methionine contacts are provided by residues 35 to 37 (GGH), Glu55, Phe82, Asp103, and Gln110.

Belongs to the methyltransferase superfamily. RsmH family.

It localises to the cytoplasm. The catalysed reaction is cytidine(1402) in 16S rRNA + S-adenosyl-L-methionine = N(4)-methylcytidine(1402) in 16S rRNA + S-adenosyl-L-homocysteine + H(+). Functionally, specifically methylates the N4 position of cytidine in position 1402 (C1402) of 16S rRNA. The sequence is that of Ribosomal RNA small subunit methyltransferase H from Desulfotalea psychrophila (strain LSv54 / DSM 12343).